The primary structure comprises 26 residues: Hemocyanin subunit 3 (26 aa).

The protein belongs to the tyrosinase family. Hemocyanin subfamily. In terms of tissue distribution, hemolymph.

The protein resides in the secreted. Its subcellular location is the extracellular space. Functionally, hemocyanins are copper-containing oxygen carriers occurring freely dissolved in the hemolymph of many mollusks and arthropods. This is Hemocyanin subunit 3 from Homarus americanus (American lobster).